The primary structure comprises 332 residues: Ferredoxin--NADP reductase (332 aa).

Residues Glu-36, Gln-44, Tyr-49, Val-91, Phe-124, and Thr-327 each coordinate FAD.

Belongs to the ferredoxin--NADP reductase type 2 family. In terms of assembly, homodimer. FAD is required as a cofactor.

The enzyme catalyses 2 reduced [2Fe-2S]-[ferredoxin] + NADP(+) + H(+) = 2 oxidized [2Fe-2S]-[ferredoxin] + NADPH. The chain is Ferredoxin--NADP reductase from Streptococcus thermophilus (strain CNRZ 1066).